The chain runs to 151 residues: Putative pre-16S rRNA nuclease (151 aa).

This sequence belongs to the YqgF nuclease family.

It localises to the cytoplasm. In terms of biological role, could be a nuclease involved in processing of the 5'-end of pre-16S rRNA. This chain is Putative pre-16S rRNA nuclease, found in Chlamydia pneumoniae (Chlamydophila pneumoniae).